The sequence spans 88 residues: UPF0297 protein LACR_0137 (88 aa).

The protein belongs to the UPF0297 family.

This is UPF0297 protein LACR_0137 from Lactococcus lactis subsp. cremoris (strain SK11).